The sequence spans 192 residues: MAKATTIKEALVKWEEKTGEKANDATAVKLYGQIPPIEKMDASLSNLVNCERLSLSTNCIEKIANLNGLKNLKILSLGRNNIKNLNGLEAVGDTLEELWISYNLIEKLKGIHVMKKLKVLYMSNNLVKEWGEFLKLADLPSLVDLVFVGNPLEEKYSADGNWIEEATKRLPKLKKLDGNPVIKQEEETEGES.

LRR repeat units follow at residues 49-70 (NCER…NGLK), 71-92 (NLKI…EAVG), 94-115 (TLEE…HVMK), and 116-137 (KLKV…LKLA). Residues 150 to 192 (NPLEEKYSADGNWIEEATKRLPKLKKLDGNPVIKQEEETEGES) form the LRRCT domain.

The protein belongs to the dynein light chain LC1-type family. As to quaternary structure, interacts with DNAH5, a outer arm dynein heavy chain. Interacts with tubulin located within the A-tubule of the outer doublets in a ATP-independent manner.

The protein localises to the cytoplasm. It is found in the cytoskeleton. The protein resides in the cilium axoneme. Functionally, part of the multisubunit axonemal ATPase complexes that generate the force for cilia motility and govern beat frequency. Component of the outer arm dynein (ODA). May be involved in a mechanosensory feedback mechanism controlling ODA activity based on external conformational cues by tethering the outer arm dynein heavy chain (DNAH5) to the microtubule within the axoneme. In Danio rerio (Zebrafish), this protein is Dynein axonemal light chain 1 (dnal1).